Consider the following 321-residue polypeptide: Urease accessory protein UreD (321 aa).

It belongs to the UreD family. As to quaternary structure, ureD, UreF and UreG form a complex that acts as a GTP-hydrolysis-dependent molecular chaperone, activating the urease apoprotein by helping to assemble the nickel containing metallocenter of UreC. The UreE protein probably delivers the nickel.

The protein resides in the cytoplasm. In terms of biological role, required for maturation of urease via the functional incorporation of the urease nickel metallocenter. The chain is Urease accessory protein UreD from Photorhabdus laumondii subsp. laumondii (strain DSM 15139 / CIP 105565 / TT01) (Photorhabdus luminescens subsp. laumondii).